A 189-amino-acid polypeptide reads, in one-letter code: MMKIVLISGKRKCGKDYISERLQRRLGSRSCIVRISEPIKSEWARKLQLDLDALLGDGPYKEKYRRDMIVWSDEVRAQDYGYFCRVAMEEALSRQQTPYILVSDVRRKNDIRWFRETYGPERVITLRLTSRPETRSARGWTFTAGIDDVPSECDLDDLADGFDVVLANDEELDQEAIDILLDRLQLQYR.

ATP contacts are provided by residues 10–16 (KRKCGKD) and Arg-138. Asn-168 provides a ligand contact to substrate.

The protein resides in the cytoplasm. Its subcellular location is the cytosol. The enzyme catalyses (R)-5-phosphomevalonate + ATP = (R)-5-diphosphomevalonate + ADP. It participates in isoprenoid biosynthesis; isopentenyl diphosphate biosynthesis via mevalonate pathway; isopentenyl diphosphate from (R)-mevalonate: step 2/3. The chain is Phosphomevalonate kinase from Drosophila melanogaster (Fruit fly).